A 426-amino-acid polypeptide reads, in one-letter code: Serine--tRNA ligase (426 aa).

233–235 is an L-serine binding site; that stretch reads TSE. 264–266 contributes to the ATP binding site; the sequence is RSE. Residue Glu-287 coordinates L-serine. 351–354 contacts ATP; the sequence is EISS. Ser-387 is a binding site for L-serine.

Belongs to the class-II aminoacyl-tRNA synthetase family. Type-1 seryl-tRNA synthetase subfamily. As to quaternary structure, homodimer. The tRNA molecule binds across the dimer.

Its subcellular location is the cytoplasm. The enzyme catalyses tRNA(Ser) + L-serine + ATP = L-seryl-tRNA(Ser) + AMP + diphosphate + H(+). It carries out the reaction tRNA(Sec) + L-serine + ATP = L-seryl-tRNA(Sec) + AMP + diphosphate + H(+). The protein operates within aminoacyl-tRNA biosynthesis; selenocysteinyl-tRNA(Sec) biosynthesis; L-seryl-tRNA(Sec) from L-serine and tRNA(Sec): step 1/1. Its function is as follows. Catalyzes the attachment of serine to tRNA(Ser). Is also able to aminoacylate tRNA(Sec) with serine, to form the misacylated tRNA L-seryl-tRNA(Sec), which will be further converted into selenocysteinyl-tRNA(Sec). In Xylella fastidiosa (strain 9a5c), this protein is Serine--tRNA ligase.